Here is a 536-residue protein sequence, read N- to C-terminus: Multicopper oxidase CueO (536 aa).

A signal peptide (tat-type signal) is located at residues 1-28 (MLRRDFLKYSVALGVASALPLWSRAAFA). 3 consecutive Plastocyanin-like domains span residues 53 to 165 (KAGQ…IEDD), 229 to 295 (GWLR…AFDL), and 424 to 536 (FHNA…GFTV). The Cu cation site is built by histidine 101, histidine 103, histidine 141, and histidine 143. Residues histidine 463, histidine 466, histidine 468, histidine 519, cysteine 520, histidine 521, and histidine 525 each contribute to the Cu cation site.

The protein belongs to the multicopper oxidase family. Monomer. Requires Cu cation as cofactor. Post-translationally, predicted to be exported by the Tat system. The position of the signal peptide cleavage has not been experimentally proven.

It localises to the periplasm. It catalyses the reaction 4 Cu(+) + O2 + 4 H(+) = 4 Cu(2+) + 2 H2O. Its function is as follows. Multicopper oxidase involved in copper homeostasis and copper tolerance under both aerobic and anaerobic conditions. Is responsible for the oxidation of Cu(+) to the less harmful Cu(2+) in the periplasm, thereby preventing Cu(+) from entering the cytoplasm. This is Multicopper oxidase CueO (cueO) from Salmonella typhimurium (strain LT2 / SGSC1412 / ATCC 700720).